Here is a 912-residue protein sequence, read N- to C-terminus: Serine/threonine-protein kinase D1 (912 aa).

Residue Tyr95 is modified to Phosphotyrosine. The Phorbol-ester/DAG-type 1 zinc finger occupies 146-196 (PHALFVHSYRAPAFCDHCGEMLWGLVRQGLKCEGCGLNYHKRCAFKIPNNC). Residues Ser205, Ser208, Ser219, and Ser223 each carry the phosphoserine modification. The segment at 270–320 (PHTFVIHSYTRPTVCQYCKKLLKGLFRQGLQCKDCRFNCHKRCAPKVPNNC) adopts a Phorbol-ester/DAG-type 2 zinc-finger fold. Phosphoserine is present on Ser345. The disordered stretch occupies residues 377-402 (NDSGEMQDPDPDHEDANRTISPSTSN). A phosphoserine; by MAPK13 mark is found at Ser397 and Ser401. Residues 422–541 (TVMKEGWMVH…WEIAIQHALM (120 aa)) enclose the PH domain. At Tyr432 the chain carries Phosphotyrosine. Residue Ser448 is modified to Phosphoserine. Tyr463 carries the post-translational modification Phosphotyrosine; by ABL. Position 473 is a phosphoserine (Ser473). Tyr502 carries the post-translational modification Phosphotyrosine. At Ser548 the chain carries Phosphoserine. Positions 583-839 (IFPDEVLGSG…VDKTLSHPWL (257 aa)) constitute a Protein kinase domain. Residues 589–597 (LGSGQFGIV) and Lys612 each bind ATP. Asp706 functions as the Proton acceptor in the catalytic mechanism. The residue at position 738 (Ser738) is a Phosphoserine; by PKC/PRKCD. Ser742 bears the Phosphoserine; by autocatalysis and PKC/PRKCD mark. Position 749 is a phosphotyrosine (Tyr749). Ser910 bears the Phosphoserine; by autocatalysis mark.

The protein belongs to the protein kinase superfamily. CAMK Ser/Thr protein kinase family. PKD subfamily. In terms of assembly, interacts (via N-terminus) with ADAP1/CENTA1. Interacts with MAPK13. Interacts with DAPK1 in an oxidative stress-regulated manner. Interacts with USP28; the interaction induces phosphorylation of USP28 and activated KRAS-mediated stabilization of ZNF304. Interacts with AKAP13 (via C-terminal domain). Mg(2+) is required as a cofactor. Phosphorylated at Ser-397 and Ser-401 by MAPK13 during regulation of insulin secretion in pancreatic beta cells. Phosphorylated by DAPK1. Phosphorylated at Tyr-95 and by ABL at Tyr-463, which primes the kinase in response to oxidative stress, and promotes a second step activating phosphorylation at Ser-738/Ser-742 by PKRD. Phosphorylated on Ser-910 upon S.enterica infection in macrophages.

The protein resides in the cytoplasm. It is found in the cell membrane. It localises to the golgi apparatus. Its subcellular location is the trans-Golgi network. The enzyme catalyses L-seryl-[protein] + ATP = O-phospho-L-seryl-[protein] + ADP + H(+). The catalysed reaction is L-threonyl-[protein] + ATP = O-phospho-L-threonyl-[protein] + ADP + H(+). Its activity is regulated as follows. Activated by DAG and phorbol esters. Phorbol-ester/DAG-type domain 1 binds DAG with high affinity and appears to play the dominant role in mediating translocation to the cell membrane and trans-Golgi network. Phorbol-ester/DAG-type domain 2 binds phorbol ester with higher affinity. Autophosphorylation of Ser-742 and phosphorylation of Ser-738 by PKC relieves auto-inhibition by the PH domain. Phosphorylation on Tyr-463 by the SRC-ABL1 pathway in response to oxidative stress, is also required for activation. Activated by DAPK1 under oxidative stress. In terms of biological role, serine/threonine-protein kinase that converts transient diacylglycerol (DAG) signals into prolonged physiological effects downstream of PKC, and is involved in the regulation of MAPK8/JNK1 and Ras signaling, Golgi membrane integrity and trafficking, cell survival through NF-kappa-B activation, cell migration, cell differentiation by mediating HDAC7 nuclear export, cell proliferation via MAPK1/3 (ERK1/2) signaling, and plays a role in cardiac hypertrophy, VEGFA-induced angiogenesis, genotoxic-induced apoptosis and flagellin-stimulated inflammatory response. Phosphorylates the epidermal growth factor receptor (EGFR) on dual threonine residues, which leads to the suppression of epidermal growth factor (EGF)-induced MAPK8/JNK1 activation and subsequent JUN phosphorylation. Phosphorylates RIN1, inducing RIN1 binding to 14-3-3 proteins YWHAB, YWHAE and YWHAZ and increased competition with RAF1 for binding to GTP-bound form of Ras proteins (NRAS, HRAS and KRAS). Acts downstream of the heterotrimeric G-protein beta/gamma-subunit complex to maintain the structural integrity of the Golgi membranes, and is required for protein transport along the secretory pathway. In the trans-Golgi network (TGN), regulates the fission of transport vesicles that are on their way to the plasma membrane. May act by activating the lipid kinase phosphatidylinositol 4-kinase beta (PI4KB) at the TGN for the local synthesis of phosphorylated inositol lipids, which induces a sequential production of DAG, phosphatidic acid (PA) and lyso-PA (LPA) that are necessary for membrane fission and generation of specific transport carriers to the cell surface. Under oxidative stress, is phosphorylated at Tyr-463 via SRC-ABL1 and contributes to cell survival by activating IKK complex and subsequent nuclear translocation and activation of NFKB1. Involved in cell migration by regulating integrin alpha-5/beta-3 recycling and promoting its recruitment in newly forming focal adhesion. In osteoblast differentiation, mediates the bone morphogenetic protein 2 (BMP2)-induced nuclear export of HDAC7, which results in the inhibition of HDAC7 transcriptional repression of RUNX2. In neurons, plays an important role in neuronal polarity by regulating the biogenesis of TGN-derived dendritic vesicles, and is involved in the maintenance of dendritic arborization and Golgi structure in hippocampal cells. May potentiate mitogenesis induced by the neuropeptide bombesin or vasopressin by mediating an increase in the duration of MAPK1/3 (ERK1/2) signaling, which leads to accumulation of immediate-early gene products including FOS that stimulate cell cycle progression. Plays an important role in the proliferative response induced by low calcium in keratinocytes, through sustained activation of MAPK1/3 (ERK1/2) pathway. Downstream of novel PKC signaling, plays a role in cardiac hypertrophy by phosphorylating HDAC5, which in turn triggers XPO1/CRM1-dependent nuclear export of HDAC5, MEF2A transcriptional activation and induction of downstream target genes that promote myocyte hypertrophy and pathological cardiac remodeling. Mediates cardiac troponin I (TNNI3) phosphorylation at the PKA sites, which results in reduced myofilament calcium sensitivity, and accelerated crossbridge cycling kinetics. The PRKD1-HDAC5 pathway is also involved in angiogenesis by mediating VEGFA-induced specific subset of gene expression, cell migration, and tube formation. In response to VEGFA, is necessary and required for HDAC7 phosphorylation which induces HDAC7 nuclear export and endothelial cell proliferation and migration. During apoptosis induced by cytarabine and other genotoxic agents, PRKD1 is cleaved by caspase-3 at Asp-378, resulting in activation of its kinase function and increased sensitivity of cells to the cytotoxic effects of genotoxic agents. In epithelial cells, is required for transducing flagellin-stimulated inflammatory responses by binding and phosphorylating TLR5, which contributes to MAPK14/p38 activation and production of inflammatory cytokines. Acts as an activator of NLRP3 inflammasome assembly by mediating phosphorylation of NLRP3. May play a role in inflammatory response by mediating activation of NF-kappa-B. May be involved in pain transmission by directly modulating TRPV1 receptor. Plays a role in activated KRAS-mediated stabilization of ZNF304 in colorectal cancer (CRC) cells. Regulates nuclear translocation of transcription factor TFEB in macrophages upon live S.enterica infection. The protein is Serine/threonine-protein kinase D1 (PRKD1) of Homo sapiens (Human).